The sequence spans 227 residues: 2,3-bisphosphoglycerate-dependent phosphoglycerate mutase (227 aa).

Residues 7–14 (RHGFSEWN), 20–21 (TG), Arg-59, 86–89 (ERHY), Lys-97, 113–114 (RR), and 182–183 (GN) contribute to the substrate site. The active-site Tele-phosphohistidine intermediate is His-8. Catalysis depends on Glu-86, which acts as the Proton donor/acceptor.

The protein belongs to the phosphoglycerate mutase family. BPG-dependent PGAM subfamily. Homodimer.

It catalyses the reaction (2R)-2-phosphoglycerate = (2R)-3-phosphoglycerate. The protein operates within carbohydrate degradation; glycolysis; pyruvate from D-glyceraldehyde 3-phosphate: step 3/5. Functionally, catalyzes the interconversion of 2-phosphoglycerate and 3-phosphoglycerate. The sequence is that of 2,3-bisphosphoglycerate-dependent phosphoglycerate mutase from Haemophilus influenzae (strain PittGG).